A 408-amino-acid chain; its full sequence is LL-diaminopimelate aminotransferase (408 aa).

2 residues coordinate substrate: Tyr-15 and Gly-42. Pyridoxal 5'-phosphate-binding positions include Tyr-72, 108–109, Tyr-132, Asn-187, Tyr-218, and 246–248; these read SK and SFS. Residues Lys-109, Tyr-132, and Asn-187 each coordinate substrate. Lys-249 carries the N6-(pyridoxal phosphate)lysine modification. The pyridoxal 5'-phosphate site is built by Arg-257 and Asn-292. Substrate contacts are provided by Asn-292 and Arg-388.

This sequence belongs to the class-I pyridoxal-phosphate-dependent aminotransferase family. LL-diaminopimelate aminotransferase subfamily. Homodimer. Pyridoxal 5'-phosphate is required as a cofactor.

It carries out the reaction (2S,6S)-2,6-diaminopimelate + 2-oxoglutarate = (S)-2,3,4,5-tetrahydrodipicolinate + L-glutamate + H2O + H(+). It functions in the pathway amino-acid biosynthesis; L-lysine biosynthesis via DAP pathway; LL-2,6-diaminopimelate from (S)-tetrahydrodipicolinate (aminotransferase route): step 1/1. Functionally, involved in the synthesis of meso-diaminopimelate (m-DAP or DL-DAP), required for both lysine and peptidoglycan biosynthesis. Catalyzes the direct conversion of tetrahydrodipicolinate to LL-diaminopimelate. The polypeptide is LL-diaminopimelate aminotransferase (Leptospira borgpetersenii serovar Hardjo-bovis (strain L550)).